Here is a 906-residue protein sequence, read N- to C-terminus: Centromere protein C (906 aa).

2 stretches are compositionally biased toward polar residues: residues 56–74 (SLTS…SSSK) and 87–96 (SSRTGEASLQ). Disordered regions lie at residues 56–115 (SLTS…NEVH) and 141–169 (QKAA…NKNI). Residues S71 and S94 each carry the phosphoserine modification. Residues 97-108 (ASAEPSEAAGGS) show a composition bias toward low complexity. Glycyl lysine isopeptide (Lys-Gly) (interchain with G-Cter in SUMO2) cross-links involve residues K150 and K182. Residues 197 to 224 (VEDNLSKGQEGTSSEITQKRDDLSSDVQ) are disordered. A compositionally biased stretch (polar residues) spans 202–212 (SKGQEGTSSEI). The Nuclear localization signal motif lies at 228–242 (KKNFSELFLETVKRK). Glycyl lysine isopeptide (Lys-Gly) (interchain with G-Cter in SUMO2) cross-links involve residues K229, K240, K242, and K266. Disordered stretches follow at residues 294–320 (RHLS…KSHS), 341–596 (AQLS…SLAI), and 623–671 (EYTS…EQDQ). Phosphoserine occurs at positions 302, 344, 363, and 404. The span at 402-424 (GQSSWENSNVSNTGQDKLQINSK) shows a compositional bias: polar residues. A compositionally biased stretch (basic and acidic residues) spans 426–450 (NMKDCEEVRNEPNPKKQKPALENKK). A Nuclear localization signal motif is present at residues 449 to 466 (KKKTNSTQTNKEKSGKKF). Residues 465–474 (KFFSGGSKNK) show a composition bias toward low complexity. The span at 481 to 494 (TLTSRRSCRISQRP) shows a compositional bias: polar residues. The residue at position 495 (S495) is a Phosphoserine. Positions 496-512 (EWWRVKSDESSVDRNPS) are enriched in basic and acidic residues. K501 is covalently cross-linked (Glycyl lysine isopeptide (Lys-Gly) (interchain with G-Cter in SUMO2)). The residue at position 505 (S505) is a Phosphoserine. Residues 523-546 (NKKKQTKRNHVSKRAGKKPGSSKR) show a composition bias toward basic residues. Positions 525-540 (KKQTKRNHVSKRAGKK) match the Nuclear localization signal motif. Over residues 626–637 (SKTQMESASNSE) the composition is skewed to polar residues. K640 participates in a covalent cross-link: Glycyl lysine isopeptide (Lys-Gly) (interchain with G-Cter in SUMO2). Residues S647 and S673 each carry the phosphoserine modification. K692 is covalently cross-linked (Glycyl lysine isopeptide (Lys-Gly) (interchain with G-Cter in SUMO2)). The interval 702 to 724 (VRRSNRIRLKPLEYWRGERVDYQ) is MIF2 homology domain II. 2 positions are modified to phosphoserine: S728 and S737. A Nuclear localization signal motif is present at residues 744-762 (KIKAQRNLGKVNKKVTKKP). K770 participates in a covalent cross-link: Glycyl lysine isopeptide (Lys-Gly) (interchain with G-Cter in SUMO2). The interval 853 to 906 (LVFYVNFGDLLCTLHETPYKLTTGDSFYVPSGNHYNIKNLLNVESSLLFTQIKR) is MIF2 homology domain III.

The protein belongs to the CENP-C/MIF2 family. Oligomer. Component of the CENPA-NAC complex, at least composed of CENPA, CENPC, CENPH, CENPM, CENPN, CENPT and CENPU. The CENPA-NAC complex interacts with the CENPA-CAD complex, composed of CENPI, CENPK, CENPL, CENPO, CENPP, CENPQ, CENPR and CENPS. Binds to DAXX. Interacts with DNMT3B. Interacts directly with CENPA. Identified in a centromere complex containing histones H2A, H2B and H4, and at least CENPA, CENPB, CENPC, CENPT, CENPN, HJURP, SUPT16H, SSRP1 and RSF1. Interacts with MEIKIN.

Its subcellular location is the nucleus. The protein resides in the chromosome. It localises to the centromere. The protein localises to the kinetochore. Functionally, component of the CENPA-NAC (nucleosome-associated) complex, a complex that plays a central role in assembly of kinetochore proteins, mitotic progression and chromosome segregation. The CENPA-NAC complex recruits the CENPA-CAD (nucleosome distal) complex and may be involved in incorporation of newly synthesized CENPA into centromeres. CENPC recruits DNA methylation and DNMT3B to both centromeric and pericentromeric satellite repeats and regulates the histone code in these regions. This is Centromere protein C (Cenpc) from Mus musculus (Mouse).